The sequence spans 735 residues: Peroxisomal multifunctional enzyme type 2 (735 aa).

A (3R)-hydroxyacyl-CoA dehydrogenase region spans residues 1–305 (MASPLRFDGR…IEVLHKIDSE (305 aa)). NAD(+) is bound by residues 16–40 (GAGG…VVND), Leu-21, and Asp-40. Lys-46 carries the N6-acetyllysine; alternate modification. At Lys-46 the chain carries N6-succinyllysine; alternate. Ser-52 bears the Phosphoserine mark. Lys-57 and Lys-68 each carry N6-succinyllysine. Residue 75-76 (SV) participates in NAD(+) binding. Lys-84 is modified (N6-succinyllysine). Asn-99 contacts NAD(+). Ser-151 is a binding site for substrate. Tyr-164 functions as the Proton acceptor in the catalytic mechanism. NAD(+) is bound by residues 164–168 (YSAAK) and 196–199 (AGSR). Thr-265 carries the post-translational modification Phosphothreonine. Lys-275 carries the N6-succinyllysine modification. A phosphoserine mark is found at Ser-304 and Ser-308. Positions 321-621 (SGFAGVVGHK…AQTPSEGGAL (301 aa)) are enoyl-CoA hydratase 2. An N6-succinyllysine modification is found at Lys-355. A (3R)-3-hydroxydecanoyl-CoA-binding site is contributed by 405 to 406 (HG). Lys-423 bears the N6-succinyllysine mark. (3R)-3-hydroxydecanoyl-CoA-binding positions include Lys-434, 509-514 (DSNPLH), Gly-532, and Phe-562. Residues 483-599 (VPSRPPDAVL…QETGDIVISN (117 aa)) enclose the MaoC-like domain. Lys-564 is modified (N6-acetyllysine). Residues Lys-578 and Lys-662 each carry the N6-succinyllysine modification. Residues 623–735 (SALVFGEIGR…QMILKDYAKL (113 aa)) enclose the SCP2 domain. Residue Lys-668 is modified to N6-acetyllysine. Positions 705 and 723 each coordinate substrate. Lys-724 is modified (N6-succinyllysine). The short motif at 733–735 (AKL) is the Microbody targeting signal element.

Belongs to the short-chain dehydrogenases/reductases (SDR) family. In terms of assembly, homodimer.

Its subcellular location is the peroxisome. The enzyme catalyses a (3R)-3-hydroxyacyl-CoA + NAD(+) = a 3-oxoacyl-CoA + NADH + H(+). It catalyses the reaction (24R,25R)-3alpha,7alpha,12alpha,24-tetrahydroxy-5beta-cholestan-26-oyl-CoA = (24E)-3alpha,7alpha,12alpha-trihydroxy-5beta-cholest-24-en-26-oyl-CoA + H2O. The catalysed reaction is a (3R)-3-hydroxyacyl-CoA = a (2E)-enoyl-CoA + H2O. It carries out the reaction (2E)-octenoyl-CoA + H2O = (3R)-hydroxyoctanoyl-CoA. The enzyme catalyses (3R)-hydroxyoctanoyl-CoA + NAD(+) = 3-oxooctanoyl-CoA + NADH + H(+). It catalyses the reaction (3R)-hydroxyhexadecanoyl-CoA + NAD(+) = 3-oxohexadecanoyl-CoA + NADH + H(+). The catalysed reaction is (2E)-hexadecenedioyl-CoA + H2O = (3R)-hydroxyhexadecanedioyl-CoA. It carries out the reaction (3R)-hydroxyhexadecanedioyl-CoA + NAD(+) = 3-oxohexadecanedioyl-CoA + NADH + H(+). The enzyme catalyses (3R)-hydroxyhexadecanoyl-CoA = (2E)-hexadecenoyl-CoA + H2O. It catalyses the reaction (3R)-3-hydroxydecanoyl-CoA = (2E)-decenoyl-CoA + H2O. The catalysed reaction is (3R)-3-hydroxydecanoyl-CoA + NAD(+) = 3-oxodecanoyl-CoA + NADH + H(+). It carries out the reaction (24R,25R)-3alpha,7alpha,12alpha,24-tetrahydroxy-5beta-cholestan-26-oyl-CoA + NAD(+) = 3alpha,7alpha,12alpha-trihydroxy-24-oxo-5beta-cholestan-26-oyl-CoA + NADH + H(+). Its pathway is lipid metabolism; fatty acid beta-oxidation. Its function is as follows. Bifunctional enzyme acting on the peroxisomal fatty acid beta-oxidation pathway. Catalyzes two of the four reactions in fatty acid degradation: hydration of 2-enoyl-CoA (trans-2-enoyl-CoA) to produce (3R)-3-hydroxyacyl-CoA, and dehydrogenation of (3R)-3-hydroxyacyl-CoA to produce 3-ketoacyl-CoA (3-oxoacyl-CoA), which is further metabolized by SCPx. Can use straight-chain and branched-chain fatty acids, as well as bile acid intermediates as substrates. This Rattus norvegicus (Rat) protein is Peroxisomal multifunctional enzyme type 2.